Here is a 279-residue protein sequence, read N- to C-terminus: Large ribosomal subunit protein uL2 (279 aa).

Positions 224 to 279 (AMNPIDHPHGGGEGRTSGGRHPVTPWGKGTKGNRTRKSKASDKLIVRSRHAKKKGR) are disordered. The segment covering 269–279 (VRSRHAKKKGR) has biased composition (basic residues).

The protein belongs to the universal ribosomal protein uL2 family. In terms of assembly, part of the 50S ribosomal subunit. Forms a bridge to the 30S subunit in the 70S ribosome.

One of the primary rRNA binding proteins. Required for association of the 30S and 50S subunits to form the 70S ribosome, for tRNA binding and peptide bond formation. It has been suggested to have peptidyltransferase activity; this is somewhat controversial. Makes several contacts with the 16S rRNA in the 70S ribosome. The protein is Large ribosomal subunit protein uL2 of Cereibacter sphaeroides (strain ATCC 17029 / ATH 2.4.9) (Rhodobacter sphaeroides).